The following is a 106-amino-acid chain: uncharacterized protein (106 aa).

This is an uncharacterized protein from Escherichia coli (strain K12).